The chain runs to 287 residues: 33 kDa chaperonin (287 aa).

Disulfide bonds link Cys-231/Cys-233 and Cys-264/Cys-267.

Belongs to the HSP33 family. Under oxidizing conditions two disulfide bonds are formed involving the reactive cysteines. Under reducing conditions zinc is bound to the reactive cysteines and the protein is inactive.

Its subcellular location is the cytoplasm. Redox regulated molecular chaperone. Protects both thermally unfolding and oxidatively damaged proteins from irreversible aggregation. Plays an important role in the bacterial defense system toward oxidative stress. This Thermosipho melanesiensis (strain DSM 12029 / CIP 104789 / BI429) protein is 33 kDa chaperonin.